The following is a 541-amino-acid chain: Man(5)GlcNAc(2)-PP-dolichol translocation protein RFT1 (541 aa).

The next 11 helical transmembrane spans lie at 16–36, 45–62, 85–105, 123–143, 154–176, 187–207, 335–355, 376–396, 414–434, 470–490, and 499–519; these read SGLL…AFIL, GIVN…TFLA, LLWL…WVWL, VLFF…WVLA, LAES…WLPH, LLYT…LLRS, LALL…QLAL, CLYV…FAAM, SFLV…FIMA, VLLG…AFLC, and LAHI…AFLT.

This sequence belongs to the RFT1 family.

It is found in the endoplasmic reticulum membrane. Its pathway is protein modification; protein glycosylation. In terms of biological role, intramembrane glycolipid transporter that operates in the biosynthetic pathway of dolichol-linked oligosaccharides, the glycan precursors employed in protein asparagine (N)-glycosylation. The sequential addition of sugars to dolichol pyrophosphate produces dolichol-linked oligosaccharides containing fourteen sugars, including two GlcNAcs, nine mannoses and three glucoses. Once assembled, the oligosaccharide is transferred from the lipid to nascent proteins by oligosaccharyltransferases. The assembly of dolichol-linked oligosaccharides begins on the cytosolic side of the endoplasmic reticulum membrane and finishes in its lumen. RFT1 could mediate the translocation of the cytosolically oriented intermediate DolPP-GlcNAc2Man5, produced by ALG11, into the ER lumen where dolichol-linked oligosaccharides assembly continues. However, the intramembrane lipid transporter activity could not be confirmed in vitro. This Mus musculus (Mouse) protein is Man(5)GlcNAc(2)-PP-dolichol translocation protein RFT1.